Reading from the N-terminus, the 176-residue chain is Shikimate kinase (176 aa).

14–19 provides a ligand contact to ATP; it reads GAGKSS. Position 18 (Ser-18) interacts with Mg(2+). 3 residues coordinate substrate: Asp-36, Arg-60, and Gly-82. Arg-120 contacts ATP. Residue Arg-138 participates in substrate binding.

Belongs to the shikimate kinase family. Monomer. Requires Mg(2+) as cofactor.

The protein localises to the cytoplasm. It catalyses the reaction shikimate + ATP = 3-phosphoshikimate + ADP + H(+). The protein operates within metabolic intermediate biosynthesis; chorismate biosynthesis; chorismate from D-erythrose 4-phosphate and phosphoenolpyruvate: step 5/7. In terms of biological role, catalyzes the specific phosphorylation of the 3-hydroxyl group of shikimic acid using ATP as a cosubstrate. This chain is Shikimate kinase, found in Dehalococcoides mccartyi (strain ATCC BAA-2266 / KCTC 15142 / 195) (Dehalococcoides ethenogenes (strain 195)).